A 413-amino-acid chain; its full sequence is MAMLRSGYRRFGCLRAALKSLAQTHHRSITFCIDPSLGLNEEQKGFQKVAFDFAAREMAPNMAEWDQKELFPVDVMRKAAQLGFGGVYVRTDVGGSGLSRLDTSVIFEALATGCTSTTAYISIHNMCAWMIDSFGNEEQRHKFCPPLCTMEKFASYCLTEPGSGSDAASLLTSAKQQGDHYILNGSKAFISGGGESDIYVVMCRTGGSGAKGISCIVVEKGTPGLSFGKKEKKVGWNSQPTRAVIFEDCAVPVANRIGTEGQGFLIAMKGLNGGRINVASCSLGAAHASVILTQEHLKVRKQFGAPLARSQYLQFQLADMATKLVASRLMIRTAAVALQEEREDAVALCSMAKLFATEECFAICNQALQMHGGYGYLKDYAVQQYMRDSRVHQILEGSNEVMRMLISRNLLQD.

A mitochondrion-targeting transit peptide spans M1–S20. An N6-acetyllysine; alternate modification is found at K48. Residue K48 is modified to N6-succinyllysine; alternate. FAD is bound by residues Y156 to S165 and F189 to S191. S165 lines the substrate pocket. The residue at position 211 (K211) is an N6-succinyllysine. Position 229 is an N6-acetyllysine (K229). An N6-succinyllysine modification is found at K269. N272 to R275 lines the substrate pocket. FAD is bound by residues R300, S310–Q311, and Q369–G373. The active-site Proton acceptor is E396. An FAD-binding site is contributed by S398–E400. Substrate is bound at residue R408.

The protein belongs to the acyl-CoA dehydrogenase family. As to quaternary structure, homotetramer, formed by a dimer of dimers. FAD is required as a cofactor.

It localises to the mitochondrion. It catalyses the reaction 2-methylpropanoyl-CoA + oxidized [electron-transfer flavoprotein] + H(+) = 2-methylpropenoyl-CoA + reduced [electron-transfer flavoprotein]. The enzyme catalyses (2S)-2-methylbutanoyl-CoA + oxidized [electron-transfer flavoprotein] + H(+) = (2E)-2-methylbut-2-enoyl-CoA + reduced [electron-transfer flavoprotein]. It carries out the reaction propanoyl-CoA + oxidized [electron-transfer flavoprotein] + H(+) = acryloyl-CoA + reduced [electron-transfer flavoprotein]. It functions in the pathway amino-acid degradation; L-valine degradation. In terms of biological role, isobutyryl-CoA dehydrogenase which catalyzes the conversion of 2-methylpropanoyl-CoA to (2E)-2-methylpropenoyl-CoA in the valine catabolic pathway. To a lesser extent, also able to catalyze the oxidation of (2S)-2-methylbutanoyl-CoA. In Mus musculus (Mouse), this protein is Isobutyryl-CoA dehydrogenase, mitochondrial.